Reading from the N-terminus, the 223-residue chain is RNA-free ribonuclease P (223 aa).

The protein belongs to the HARP family.

The enzyme catalyses Endonucleolytic cleavage of RNA, removing 5'-extranucleotides from tRNA precursor.. In terms of biological role, RNA-free RNase P that catalyzes the removal of the 5'-leader sequence from pre-tRNA to produce the mature 5'-terminus. In Methanococcus maripaludis (strain DSM 14266 / JCM 13030 / NBRC 101832 / S2 / LL), this protein is RNA-free ribonuclease P.